The primary structure comprises 447 residues: Putative branched-chain amino acid carrier protein SSP1343 (447 aa).

Helical transmembrane passes span 6 to 26 (WIIG…IFPP), 40 to 60 (ILAF…VGAL), 74 to 94 (PKFS…LFAI), 116 to 136 (LALF…CINP), 143 to 163 (IGSL…VKGF), 192 to 212 (GYLT…VNAV), 228 to 248 (LMAG…LGYI), 289 to 309 (LLGI…VVAV), 324 to 344 (IYVI…LNSV), 349 to 369 (VPVL…ILLA), 381 to 401 (IPVA…QGWI), and 416 to 436 (LEWF…AAMV).

This sequence belongs to the branched chain amino acid transporter family.

The protein localises to the cell membrane. Functionally, component of the transport system for branched-chain amino acids (leucine, isoleucine and valine), which is coupled to a proton motive force. The chain is Putative branched-chain amino acid carrier protein SSP1343 from Staphylococcus saprophyticus subsp. saprophyticus (strain ATCC 15305 / DSM 20229 / NCIMB 8711 / NCTC 7292 / S-41).